The sequence spans 283 residues: Pantothenate synthetase (283 aa).

30-37 (MGNLHAGH) is an ATP binding site. Histidine 37 serves as the catalytic Proton donor. Glutamine 61 lines the (R)-pantoate pocket. Position 61 (glutamine 61) interacts with beta-alanine. Residue 149 to 152 (GEKD) coordinates ATP. Glutamine 155 is a (R)-pantoate binding site. ATP contacts are provided by residues valine 178 and 186–189 (LSSR).

The protein belongs to the pantothenate synthetase family. As to quaternary structure, homodimer.

The protein resides in the cytoplasm. The catalysed reaction is (R)-pantoate + beta-alanine + ATP = (R)-pantothenate + AMP + diphosphate + H(+). Its pathway is cofactor biosynthesis; (R)-pantothenate biosynthesis; (R)-pantothenate from (R)-pantoate and beta-alanine: step 1/1. Functionally, catalyzes the condensation of pantoate with beta-alanine in an ATP-dependent reaction via a pantoyl-adenylate intermediate. This is Pantothenate synthetase from Pseudomonas aeruginosa (strain UCBPP-PA14).